The chain runs to 357 residues: Protein RecA (357 aa).

An ATP-binding site is contributed by 69 to 76 (GPESSGKT). A disordered region spans residues 337 to 357 (SANSVAKNNEDDEDEDVEEEE). Over residues 346–357 (EDDEDEDVEEEE) the composition is skewed to acidic residues.

It belongs to the RecA family.

It is found in the cytoplasm. Can catalyze the hydrolysis of ATP in the presence of single-stranded DNA, the ATP-dependent uptake of single-stranded DNA by duplex DNA, and the ATP-dependent hybridization of homologous single-stranded DNAs. It interacts with LexA causing its activation and leading to its autocatalytic cleavage. The chain is Protein RecA from Nostoc sp. (strain PCC 7120 / SAG 25.82 / UTEX 2576).